We begin with the raw amino-acid sequence, 231 residues long: MSDKPSELAVQKLVLFAVKGTATSTHNTVRPLILLDELGVPHEIYVVDRVSAPWFTEINPHRMVPVILEKSPDGRDTLRAWESTSTLMYIADAYDKDGTFGGRNVQESSDINNWLTLHTAALGPTAKYWLYFYKLHPEKLPKTIEKLRSNITVQYDILERRLNEPGQQYLAWLNEKFKRSSYNRRHCYASLCYEKYRRVVRAGVKVAQTARVVCPYGGDTRRGVWPARKST.

One can recognise a GST N-terminal domain in the interval 15-98; that stretch reads LFAVKGTATS…YIADAYDKDG (84 aa).

This sequence belongs to the GST superfamily.

The enzyme catalyses RX + glutathione = an S-substituted glutathione + a halide anion + H(+). Conjugation of reduced glutathione to a wide number of exogenous and endogenous hydrophobic electrophiles. The chain is Glutathione-S-transferase from Alternaria alternata (Alternaria rot fungus).